A 669-amino-acid polypeptide reads, in one-letter code: Protein real-time (669 aa).

One can recognise a PRELI/MSF1 domain in the interval 3-175 (QKFQSPVRVY…FINQLEQEGV (173 aa)). Positions 284–460 (EPAVVVEHFP…FLGGPCKTMI (177 aa)) constitute a CRAL-TRIO domain. In terms of domain architecture, GOLD spans 522–641 (HQNLYKSVDL…QLNLFYEVLS (120 aa)).

The protein localises to the mitochondrion. The polypeptide is Protein real-time (Drosophila pseudoobscura pseudoobscura (Fruit fly)).